We begin with the raw amino-acid sequence, 543 residues long: Glutamyl-tRNA(Gln) amidotransferase subunit A, chloroplastic/mitochondrial (543 aa).

Residues K123 and S198 each act as charge relay system in the active site. The active-site Acyl-ester intermediate is S222.

This sequence belongs to the amidase family. GatA subfamily. Subunit of the heterotrimeric GatCAB amidotransferase (AdT) complex, composed of A, B and C subunits.

It localises to the mitochondrion. The protein localises to the plastid. It is found in the chloroplast stroma. The enzyme catalyses L-glutamyl-tRNA(Gln) + L-glutamine + ATP + H2O = L-glutaminyl-tRNA(Gln) + L-glutamate + ADP + phosphate + H(+). In terms of biological role, allows the formation of correctly charged Gln-tRNA(Gln) through the transamidation of misacylated Glu-tRNA(Gln) in chloroplasts and mitochondria. The reaction takes place in the presence of glutamine and ATP through an activated gamma-phospho-Glu-tRNA(Gln). This is Glutamyl-tRNA(Gln) amidotransferase subunit A, chloroplastic/mitochondrial from Oryza sativa subsp. japonica (Rice).